A 432-amino-acid chain; its full sequence is Enolase (432 aa).

(2R)-2-phosphoglycerate is bound at residue Gln167. The active-site Proton donor is the Glu209. 3 residues coordinate Mg(2+): Asp246, Glu291, and Asp318. (2R)-2-phosphoglycerate-binding residues include Lys343, Arg372, Ser373, and Lys394. Lys343 acts as the Proton acceptor in catalysis.

Belongs to the enolase family. As to quaternary structure, component of the RNA degradosome, a multiprotein complex involved in RNA processing and mRNA degradation. The cofactor is Mg(2+).

Its subcellular location is the cytoplasm. The protein localises to the secreted. It is found in the cell surface. The catalysed reaction is (2R)-2-phosphoglycerate = phosphoenolpyruvate + H2O. It functions in the pathway carbohydrate degradation; glycolysis; pyruvate from D-glyceraldehyde 3-phosphate: step 4/5. Functionally, catalyzes the reversible conversion of 2-phosphoglycerate (2-PG) into phosphoenolpyruvate (PEP). It is essential for the degradation of carbohydrates via glycolysis. The polypeptide is Enolase (Aliivibrio salmonicida (strain LFI1238) (Vibrio salmonicida (strain LFI1238))).